The following is a 206-amino-acid chain: MSLRRRTLLKVIVLGDTGVGKTSLMNQYVHKKFSQQYKATIGADFVTKELQIDDRLVTLQIWDTAGQERFQSLGVAFYRGADCCVLAYDVNVMKSFDTLDNWHEEFLKQANPPDPRSFPFILLGNKIDIDGGNSRVVSEKKAKDWCASKGNIPYFETSAKEDFNVDAAFLCIAKAALANEHEQDIYFQGIPEAAVPENEQRSGCAC.

GTP-binding positions include 15–22, 63–67, and 125–128; these read GDTGVGKT, DTAGQ, and NKID. S-geranylgeranyl cysteine attachment occurs at residues Cys204 and Cys206. The residue at position 206 (Cys206) is a Cysteine methyl ester.

This sequence belongs to the small GTPase superfamily. Rab family.

The protein localises to the cell membrane. Its function is as follows. Protein transport. Probably involved in vesicular traffic. In Vigna aconitifolia (Moth bean), this protein is Ras-related protein Rab7.